Consider the following 557-residue polypeptide: DNA 3'-5' helicase XPB (557 aa).

Positions 1-135 (MTDGPLIVQS…APLLGTRIAP (135 aa)) are required for protein stability or solubility. In terms of domain architecture, Helicase ATP-binding spans 190–344 (VDNFWNGGSG…DVFSLIGPKR (155 aa)). 203-210 (LPCGAGKT) contacts ATP. A DEAH box motif is present at residues 298-301 (DEVH). The region spanning 398–544 (RVVEKLVAQH…AYRIVDADDI (147 aa)) is the Helicase C-terminal domain.

Belongs to the helicase family. RAD25/XPB subfamily. As to quaternary structure, monomer. Mn(2+) serves as cofactor. Requires Mg(2+) as cofactor. It depends on Ca(2+) as a cofactor.

It catalyses the reaction Couples ATP hydrolysis with the unwinding of duplex DNA by translocating in the 3'-5' direction.. The enzyme catalyses ATP + H2O = ADP + phosphate + H(+). ATP-dependent 3'-5' DNA helicase, unwinds 3'-overhangs, 3'- flaps, and splayed-arm DNA substrates but not 5'-overhangs or 5'-flap substrates. Requires ATP hydrolysis for activity; the ATPase activity is DNA-dependent and requires a minimum of 4 single-stranded nucleotides (nt) with 6-10 nt providing all necessary interactions for full processive unwinding. The ATPase prefers ATP over CTP or GTP, is almost inactive with TTP. In Kineococcus radiotolerans (strain ATCC BAA-149 / DSM 14245 / SRS30216), this protein is DNA 3'-5' helicase XPB.